Consider the following 529-residue polypeptide: Inosine-5'-monophosphate dehydrogenase (529 aa).

CBS domains are found at residues 129–185 (MVTD…SKQV) and 189–246 (MTKT…PLAT). Residues aspartate 283 and 334–336 (GVG) each bind NAD(+). K(+) contacts are provided by glycine 336 and glycine 338. Residue serine 339 coordinates IMP. Position 341 (cysteine 341) interacts with K(+). The active-site Thioimidate intermediate is cysteine 341. IMP is bound by residues 374–376 (DGG), 397–398 (GS), and 421–425 (YRGMG). Residue arginine 443 is the Proton acceptor of the active site. Residue glutamate 458 coordinates IMP. 3 residues coordinate K(+): glutamate 511, serine 512, and histidine 513.

This sequence belongs to the IMPDH/GMPR family. Homotetramer. K(+) is required as a cofactor.

The enzyme catalyses IMP + NAD(+) + H2O = XMP + NADH + H(+). The protein operates within purine metabolism; XMP biosynthesis via de novo pathway; XMP from IMP: step 1/1. With respect to regulation, mycophenolic acid (MPA) is a non-competitive inhibitor that prevents formation of the closed enzyme conformation by binding to the same site as the amobile flap. In contrast, mizoribine monophosphate (MZP) is a competitive inhibitor that induces the closed conformation. MPA is a potent inhibitor of mammalian IMPDHs but a poor inhibitor of the bacterial enzymes. MZP is a more potent inhibitor of bacterial IMPDH. Catalyzes the conversion of inosine 5'-phosphate (IMP) to xanthosine 5'-phosphate (XMP), the first committed and rate-limiting step in the de novo synthesis of guanine nucleotides, and therefore plays an important role in the regulation of cell growth. This chain is Inosine-5'-monophosphate dehydrogenase, found in Mycobacterium leprae (strain TN).